Reading from the N-terminus, the 123-residue chain is UPF0231 protein plu3616 (123 aa).

It belongs to the UPF0231 family.

This is UPF0231 protein plu3616 from Photorhabdus laumondii subsp. laumondii (strain DSM 15139 / CIP 105565 / TT01) (Photorhabdus luminescens subsp. laumondii).